Reading from the N-terminus, the 89-residue chain is Class II hydrophobin 2 (89 aa).

Residues 1–15 (MKLYIAAALLTLGLA) form the signal peptide. Intrachain disulfides connect C34–C74, C45–C66, C46–C58, and C75–C86.

Belongs to the cerato-ulmin hydrophobin family. Homodimer. Homodimers further self-assemble to form highly ordered films at water-air interfaces through intermolecular interactions.

Its subcellular location is the secreted. It localises to the cell wall. Aerial growth, conidiation, and dispersal of filamentous fungi in the environment rely upon a capability of their secreting small amphipathic proteins called hydrophobins (HPBs) with low sequence identity. Class I can self-assemble into an outermost layer of rodlet bundles on aerial cell surfaces, conferring cellular hydrophobicity that supports fungal growth, development and dispersal; whereas Class II form highly ordered films at water-air interfaces through intermolecular interactions but contribute nothing to the rodlet structure. In Trichoderma asperellum (strain ATCC 204424 / CBS 433.97 / NBRC 101777), this protein is Class II hydrophobin 2.